The primary structure comprises 452 residues: Cobyrinate a,c-diamide synthase (452 aa).

The GATase cobBQ-type domain maps to 244–437; that stretch reads KIAYAYDEAF…VHINLYTYKE (194 aa). Cys-327 serves as the catalytic Nucleophile.

It belongs to the CobB/CbiA family. Mg(2+) serves as cofactor.

It catalyses the reaction cob(II)yrinate + 2 L-glutamine + 2 ATP + 2 H2O = cob(II)yrinate a,c diamide + 2 L-glutamate + 2 ADP + 2 phosphate + 2 H(+). The protein operates within cofactor biosynthesis; adenosylcobalamin biosynthesis; cob(II)yrinate a,c-diamide from sirohydrochlorin (anaerobic route): step 10/10. Its function is as follows. Catalyzes the ATP-dependent amidation of the two carboxylate groups at positions a and c of cobyrinate, using either L-glutamine or ammonia as the nitrogen source. The polypeptide is Cobyrinate a,c-diamide synthase (Caldanaerobacter subterraneus subsp. tengcongensis (strain DSM 15242 / JCM 11007 / NBRC 100824 / MB4) (Thermoanaerobacter tengcongensis)).